The following is a 332-amino-acid chain: Tsukubadiene synthase (332 aa).

Asp75 and Glu80 together coordinate Mg(2+). Residues 75 to 80 (DDHLDE) carry the DDXXXE motif motif. Arg165 serves as a coordination point for substrate. The Mg(2+) site is built by Ser212, Ser216, and Glu220. Positions 212 to 220 (SDLHSFQLE) match the SXXXSXXXE motif motif. 298-299 (RY) contacts substrate.

It belongs to the terpene synthase family. It depends on Mg(2+) as a cofactor.

The catalysed reaction is (2E,6E,10E)-geranylgeranyl diphosphate = tsukubadiene + diphosphate. Catalyzes the formation of the 5-9-5 ring skeleton (3S,6S,11R,14S)-tsukubadiene from geranylgeranyl diphosphate (GGPP) via a 1,11-cyclization and a 10Re,14Re-cyclization. This is Tsukubadiene synthase from Streptomyces tsukubensis (strain DSM 42081 / NBRC 108919 / NRRL 18488 / 9993).